We begin with the raw amino-acid sequence, 70 residues long: Sec-independent protein translocase protein TatA (70 aa).

A helical transmembrane segment spans residues 1–21; the sequence is MGIGVWELLLLFLIVLVVFGT. The disordered stretch occupies residues 42-70; it reads MSENEDKPSEGGARTLEGEVVDKKEKDKV. A compositionally biased stretch (basic and acidic residues) spans 57-70; sequence LEGEVVDKKEKDKV.

This sequence belongs to the TatA/E family. In terms of assembly, the Tat system comprises two distinct complexes: a TatABC complex, containing multiple copies of TatA, TatB and TatC subunits, and a separate TatA complex, containing only TatA subunits. Substrates initially bind to the TatABC complex, which probably triggers association of the separate TatA complex to form the active translocon.

Its subcellular location is the cell inner membrane. Functionally, part of the twin-arginine translocation (Tat) system that transports large folded proteins containing a characteristic twin-arginine motif in their signal peptide across membranes. TatA could form the protein-conducting channel of the Tat system. The chain is Sec-independent protein translocase protein TatA from Methylococcus capsulatus (strain ATCC 33009 / NCIMB 11132 / Bath).